Consider the following 175-residue polypeptide: uncharacterized protein (175 aa).

The span at 1 to 17 (MKVEGGESMHESEEGRD) shows a compositional bias: basic and acidic residues. A disordered region spans residues 1-21 (MKVEGGESMHESEEGRDVPNG).

This is an uncharacterized protein from Bacillus thuringiensis subsp. kurstaki.